A 348-amino-acid polypeptide reads, in one-letter code: UDP-glucose 4-epimerase (348 aa).

Residues 12 to 14 (GYI), 33 to 37 (DNFHN), 66 to 67 (DI), phenylalanine 88, and lysine 92 each bind NAD(+). Position 132 to 134 (132 to 134 (SAT)) interacts with substrate. Tyrosine 157 serves as the catalytic Proton acceptor. NAD(+) contacts are provided by lysine 161 and tyrosine 185. Residues 185–187 (YFN), 206–208 (NNL), 224–226 (NVF), arginine 239, and 300–303 (REGD) each bind substrate.

Belongs to the NAD(P)-dependent epimerase/dehydratase family. In terms of assembly, homodimer. It depends on NAD(+) as a cofactor.

It carries out the reaction UDP-alpha-D-glucose = UDP-alpha-D-galactose. The catalysed reaction is UDP-N-acetyl-alpha-D-glucosamine = UDP-N-acetyl-alpha-D-galactosamine. The protein operates within carbohydrate metabolism; galactose metabolism. Its function is as follows. Catalyzes two distinct but analogous reactions: the reversible epimerization of UDP-glucose to UDP-galactose and the reversible epimerization of UDP-N-acetylglucosamine to UDP-N-acetylgalactosamine. The reaction with UDP-Gal plays a critical role in the Leloir pathway of galactose catabolism in which galactose is converted to the glycolytic intermediate glucose 6-phosphate. It contributes to the catabolism of dietary galactose and enables the endogenous biosynthesis of both UDP-Gal and UDP-GalNAc when exogenous sources are limited. Both UDP-sugar interconversions are important in the synthesis of glycoproteins and glycolipids. This chain is UDP-glucose 4-epimerase (GALE), found in Pongo abelii (Sumatran orangutan).